The sequence spans 201 residues: MQSTQISSTTVILPSEVIQPPQQSAVPSEFKNTLPSRLNLFEGFDQSFSELTNPYQPVIPLMQRESLLGASSYYSSPSQNQRSYQNHRQHSNPDTINLRSQQQKRKPRVLFTQHQVNELEERFKKQRYVTATEREELAQCLGLTATQVKIWFQNRRYKCKRLAQDRTLQLSQIPFNPMFASAFPFGINSFGTAPSSSSSGS.

Over residues 72–84 (SYYSSPSQNQRSY) the composition is skewed to polar residues. Residues 72-94 (SYYSSPSQNQRSYQNHRQHSNPD) form a disordered region. The homeobox DNA-binding region spans 104–163 (KRKPRVLFTQHQVNELEERFKKQRYVTATEREELAQCLGLTATQVKIWFQNRRYKCKRLA).

Belongs to the NK-2 homeobox family.

Its subcellular location is the nucleus. Functionally, probable transcription factor that regulates neuronal differention, including synapse assembly of the cholinergic motor neuron M4. Activates expression of growth factor, neuropeptide and transcription factor genes, such as TGF-beta dbl-1, FMRFamide-like flp-5 and transcription repressor zag-1, in the M4 neuron. Required for pharynx peristalsis. This is Homeobox protein ceh-28 from Caenorhabditis elegans.